The chain runs to 283 residues: Protein FdhE homolog (283 aa).

It belongs to the FdhE family.

The protein localises to the cytoplasm. Necessary for formate dehydrogenase activity. The polypeptide is Protein FdhE homolog (Aquifex aeolicus (strain VF5)).